The chain runs to 205 residues: FMN-dependent NADH:quinone oxidoreductase (205 aa).

FMN-binding positions include Ser10 and 16–18 (SVS).

The protein belongs to the azoreductase type 1 family. As to quaternary structure, homodimer. FMN serves as cofactor.

It catalyses the reaction 2 a quinone + NADH + H(+) = 2 a 1,4-benzosemiquinone + NAD(+). It carries out the reaction N,N-dimethyl-1,4-phenylenediamine + anthranilate + 2 NAD(+) = 2-(4-dimethylaminophenyl)diazenylbenzoate + 2 NADH + 2 H(+). In terms of biological role, quinone reductase that provides resistance to thiol-specific stress caused by electrophilic quinones. Functionally, also exhibits azoreductase activity. Catalyzes the reductive cleavage of the azo bond in aromatic azo compounds to the corresponding amines. The polypeptide is FMN-dependent NADH:quinone oxidoreductase (Agrobacterium fabrum (strain C58 / ATCC 33970) (Agrobacterium tumefaciens (strain C58))).